The following is a 185-amino-acid chain: Ribosome-recycling factor (185 aa).

This sequence belongs to the RRF family.

It localises to the cytoplasm. Functionally, responsible for the release of ribosomes from messenger RNA at the termination of protein biosynthesis. May increase the efficiency of translation by recycling ribosomes from one round of translation to another. This chain is Ribosome-recycling factor, found in Buchnera aphidicola subsp. Acyrthosiphon pisum (strain Tuc7).